We begin with the raw amino-acid sequence, 189 residues long: HGPRTase-like protein 2 (189 aa).

The protein belongs to the purine/pyrimidine phosphoribosyltransferase family. Archaeal HPRT subfamily.

May catalyze a purine salvage reaction, the substrate is unknown. The sequence is that of HGPRTase-like protein 2 from Haloarcula marismortui (strain ATCC 43049 / DSM 3752 / JCM 8966 / VKM B-1809) (Halobacterium marismortui).